Here is a 404-residue protein sequence, read N- to C-terminus: Cysteine desulfurase IscS (404 aa).

Residues 75–76 (AT), Asn-155, Gln-183, and 203–205 (SGH) contribute to the pyridoxal 5'-phosphate site. Position 206 is an N6-(pyridoxal phosphate)lysine (Lys-206). Residue Thr-243 participates in pyridoxal 5'-phosphate binding. Catalysis depends on Cys-328, which acts as the Cysteine persulfide intermediate. [2Fe-2S] cluster is bound at residue Cys-328.

It belongs to the class-V pyridoxal-phosphate-dependent aminotransferase family. NifS/IscS subfamily. As to quaternary structure, homodimer. Forms a heterotetramer with IscU, interacts with other sulfur acceptors. Requires pyridoxal 5'-phosphate as cofactor.

The protein localises to the cytoplasm. The enzyme catalyses (sulfur carrier)-H + L-cysteine = (sulfur carrier)-SH + L-alanine. Its pathway is cofactor biosynthesis; iron-sulfur cluster biosynthesis. Master enzyme that delivers sulfur to a number of partners involved in Fe-S cluster assembly, tRNA modification or cofactor biosynthesis. Catalyzes the removal of elemental sulfur atoms from cysteine to produce alanine. Functions as a sulfur delivery protein for Fe-S cluster synthesis onto IscU, an Fe-S scaffold assembly protein, as well as other S acceptor proteins. The protein is Cysteine desulfurase IscS of Shewanella baltica (strain OS185).